The sequence spans 932 residues: Protocadherin gamma-A9 (932 aa).

The signal sequence occupies residues 1–28; it reads MAAPTKCQLRGRLVLLCSLLGMLWEARA. Cadherin domains follow at residues 29–133, 134–242, 243–347, 348–452, 453–562, and 570–683; these read SQIR…APKF, QAES…APVF, AQRI…RPEV, TITS…PPAF, SQAS…APEI, and DGST…IPAD. The Extracellular segment spans residues 29–692; it reads SQIRYSVPEE…DLEASDLTLY (664 aa). N-linked (GlcNAc...) asparagine glycosylation is found at Asn-47 and Asn-127. Residues Asn-389, Asn-419, and Asn-545 are each glycosylated (N-linked (GlcNAc...) asparagine). The chain crosses the membrane as a helical span at residues 693 to 713; it reads LVVAVAVVSCVFLTFVITLLA. The Cytoplasmic segment spans residues 714-932; the sequence is LRLRHWHSSH…KKKSGKKEKK (219 aa). Disordered regions lie at residues 803 to 841 and 902 to 932; these read DTPL…WPNN and ATLT…KEKK. Residues 816–841 are compositionally biased toward polar residues; sequence WRFSQAQRPGTSGSQNGDDTGTWPNN. The segment covering 922-932 has biased composition (basic residues); it reads NKKKSGKKEKK.

It localises to the cell membrane. Its function is as follows. Potential calcium-dependent cell-adhesion protein. May be involved in the establishment and maintenance of specific neuronal connections in the brain. The chain is Protocadherin gamma-A9 (PCDHGA9) from Pan troglodytes (Chimpanzee).